Consider the following 290-residue polypeptide: Shikimate dehydrogenase (NADP(+)) (290 aa).

Residues 18-20 (SYS) and Thr-66 contribute to the shikimate site. Lys-70 (proton acceptor) is an active-site residue. Residue Glu-82 participates in NADP(+) binding. Asn-91 and Asp-106 together coordinate shikimate. NADP(+) is bound by residues 130–134 (GSGGA) and Met-229. Tyr-231 contributes to the shikimate binding site. Position 252 (Gly-252) interacts with NADP(+).

The protein belongs to the shikimate dehydrogenase family. In terms of assembly, homodimer.

It carries out the reaction shikimate + NADP(+) = 3-dehydroshikimate + NADPH + H(+). It participates in metabolic intermediate biosynthesis; chorismate biosynthesis; chorismate from D-erythrose 4-phosphate and phosphoenolpyruvate: step 4/7. Functionally, involved in the biosynthesis of the chorismate, which leads to the biosynthesis of aromatic amino acids. Catalyzes the reversible NADPH linked reduction of 3-dehydroshikimate (DHSA) to yield shikimate (SA). This Chlorobium phaeovibrioides (strain DSM 265 / 1930) (Prosthecochloris vibrioformis (strain DSM 265)) protein is Shikimate dehydrogenase (NADP(+)).